A 536-amino-acid polypeptide reads, in one-letter code: E3 ubiquitin-protein ligase Godzilla (536 aa).

The N-terminal stretch at 1-21 (MSKRSCQILTLLGLCLVCHEA) is a signal peptide. Residues 22–174 (TLVGGHVLVY…DELPFNINTQ (153 aa)) are Extracellular-facing. Positions 89-151 (FVALVARGEC…FVGHTTGKAL (63 aa)) constitute a PA domain. N-linked (GlcNAc...) asparagine glycans are attached at residues N109 and N132. Residues 175-195 (LILPFSILIGMCFIIMVIYMI) traverse the membrane as a helical segment. Topologically, residues 196–536 (YKCIREQRRL…HSASDRQFLI (341 aa)) are cytoplasmic. The RING-type; atypical zinc-finger motif lies at 235–277 (CVICLEDFIEDDKLRVLPCSHPYHTHCIDPWLTENRRVCPICK). Disordered stretches follow at residues 287–334 (RASR…GAAG) and 350–372 (HGTFRRGHAGRNPFEESQSSDDE). Residues 307-334 (TPLLQQQQSNGRQVGQVSSASSAGGAAG) are compositionally biased toward low complexity.

The protein belongs to the Godzilla family.

It is found in the endosome membrane. It catalyses the reaction S-ubiquitinyl-[E2 ubiquitin-conjugating enzyme]-L-cysteine + [acceptor protein]-L-lysine = [E2 ubiquitin-conjugating enzyme]-L-cysteine + N(6)-ubiquitinyl-[acceptor protein]-L-lysine.. Its pathway is protein modification; protein ubiquitination. In terms of biological role, endosomal E3 ubiquitin-protein ligase that regulates the recycling endosome pathway by mediating ubiquitination of Synaptobrevin (Syb). Also acts as a regulator of transcytosis in wing imaginal disks by catalyzing ubiquitination of Syb: ubiquitination of Syb promotes transcytosis of wingless (wg) to the basolateral surface. This Drosophila melanogaster (Fruit fly) protein is E3 ubiquitin-protein ligase Godzilla.